Consider the following 213-residue polypeptide: Ribonuclease HII (213 aa).

The RNase H type-2 domain maps to 27-213 (HAVAGVDEAG…FRGVKEHVAP (187 aa)). A divalent metal cation contacts are provided by Asp33, Glu34, and Asp125.

Belongs to the RNase HII family. Requires Mn(2+) as cofactor. It depends on Mg(2+) as a cofactor.

Its subcellular location is the cytoplasm. It catalyses the reaction Endonucleolytic cleavage to 5'-phosphomonoester.. Its function is as follows. Endonuclease that specifically degrades the RNA of RNA-DNA hybrids. This Geobacter metallireducens (strain ATCC 53774 / DSM 7210 / GS-15) protein is Ribonuclease HII.